Reading from the N-terminus, the 596-residue chain is Succinate dehydrogenase flavoprotein subunit (596 aa).

Residues Gly18–Gly23, Ser41–Gly56, and Asp225 contribute to the FAD site. Position 49 is a tele-8alpha-FAD histidine (His49). Residues His246 and Thr258 each contribute to the substrate site. Residue Arg290 is the Proton acceptor of the active site. His357 contacts substrate. An FAD-binding site is contributed by Glu391. Position 402 (Arg402) interacts with substrate. Ser407–Leu408 contributes to the FAD binding site.

Belongs to the FAD-dependent oxidoreductase 2 family. FRD/SDH subfamily. Part of an enzyme complex containing four subunits: a flavoprotein, an iron-sulfur, cytochrome b-556, and a hydrophobic anchor protein. The cofactor is FAD.

Its subcellular location is the cell inner membrane. The catalysed reaction is a quinone + succinate = fumarate + a quinol. It functions in the pathway carbohydrate metabolism; tricarboxylic acid cycle; fumarate from succinate (bacterial route): step 1/1. This chain is Succinate dehydrogenase flavoprotein subunit (sdhA), found in Rickettsia bellii (strain RML369-C).